Reading from the N-terminus, the 397-residue chain is Ribosomal RNA processing protein 1 homolog (397 aa).

The span at 334-343 shows a compositional bias: basic and acidic residues; the sequence is EAAEAARQEN. Residues 334 to 366 are disordered; that stretch reads EAAEAARQENGDDVPDDEIAEVKKGNGKKTAVP.

Belongs to the RRP1 family.

The protein localises to the nucleus. Functionally, may be involved in the generation of 28S rRNA. This is Ribosomal RNA processing protein 1 homolog from Caenorhabditis elegans.